A 185-amino-acid polypeptide reads, in one-letter code: Ribosome-recycling factor (185 aa).

Belongs to the RRF family.

Its subcellular location is the cytoplasm. In terms of biological role, responsible for the release of ribosomes from messenger RNA at the termination of protein biosynthesis. May increase the efficiency of translation by recycling ribosomes from one round of translation to another. This is Ribosome-recycling factor from Salmonella arizonae (strain ATCC BAA-731 / CDC346-86 / RSK2980).